The sequence spans 149 residues: Protein K7 (149 aa).

It belongs to the orthopoxvirus OPG044 family. As to quaternary structure, interacts with DDX3; this interaction inhibits DDX3 and suppresses DDX3-mediated IFN-beta promoter induction. Interacts with TRAF6 and IRAK2; these interactions suppress TLR-dependent NF-KappaB activation.

The protein localises to the host cytoplasm. Functionally, virulence factor that affects the acute immune response to infection. Bcl-2-like protein which, through its interaction with the DEAD box RNA helicase DDX3X/DDX3, prevents TBK1/IKKepsilon-mediated IRF3 activation. Contributes to virulence by binding to the host TRAF6 and IRAK2 and preventing host NF-kappa-B activation. This Cynomys gunnisoni (Gunnison's prairie dog) protein is Protein K7 (OPG044).